Consider the following 100-residue polypeptide: Putative pterin-4-alpha-carbinolamine dehydratase (100 aa).

Belongs to the pterin-4-alpha-carbinolamine dehydratase family.

The catalysed reaction is (4aS,6R)-4a-hydroxy-L-erythro-5,6,7,8-tetrahydrobiopterin = (6R)-L-erythro-6,7-dihydrobiopterin + H2O. This chain is Putative pterin-4-alpha-carbinolamine dehydratase, found in Alteromonas mediterranea (strain DSM 17117 / CIP 110805 / LMG 28347 / Deep ecotype).